Here is a 318-residue protein sequence, read N- to C-terminus: Mitochondrial coenzyme A transporter SLC25A42 (318 aa).

3 Solcar repeats span residues 31–117, 129–214, and 224–312; these read RQVL…YKRI, LPPW…LKSL, and PYPF…MQIL. The next 6 membrane-spanning stretches (helical) occupy residues 33–53, 89–109, 135–155, 186–206, 230–250, and 293–313; these read VLSS…AVAP, LWRG…IQFS, LLAG…LDLV, LYFG…LSFF, MVFG…LDVV, and LKGP…QILL.

It belongs to the mitochondrial carrier (TC 2.A.29) family.

The protein localises to the mitochondrion inner membrane. The enzyme catalyses ADP(out) + CoA(in) = ADP(in) + CoA(out). The catalysed reaction is 3'-dephospho-CoA(in) + ADP(out) = 3'-dephospho-CoA(out) + ADP(in). It catalyses the reaction adenosine 3',5'-bisphosphate(in) + ADP(out) = adenosine 3',5'-bisphosphate(out) + ADP(in). It carries out the reaction AMP(in) + ADP(out) = AMP(out) + ADP(in). The enzyme catalyses dADP(in) + ADP(out) = dADP(out) + ADP(in). The catalysed reaction is ADP(in) + ATP(out) = ADP(out) + ATP(in). Mitochondrial carrier mediating the transport of coenzyme A (CoA) in mitochondria in exchange for intramitochondrial (deoxy)adenine nucleotides and adenosine 3',5'-diphosphate. The chain is Mitochondrial coenzyme A transporter SLC25A42 (Slc25a42) from Mus musculus (Mouse).